We begin with the raw amino-acid sequence, 119 residues long: FAD-linked sulfhydryl oxidase (119 aa).

In terms of domain architecture, ERV/ALR sulfhydryl oxidase spans 1 to 97; the sequence is MLHWGPKFWR…ISWSEYKNIY (97 aa). A disulfide bond links Cys44 and Cys47.

This sequence belongs to the asfivirus B119L family. Interacts with A151R. It depends on FAD as a cofactor.

The protein resides in the host cytoplasm. It is found in the virion. It catalyses the reaction 2 R'C(R)SH + O2 = R'C(R)S-S(R)CR' + H2O2. In terms of biological role, FAD-dependent sulfhydryl oxidase that catalyzes the formation of disulfide bonds in viral proteins produced in the cell cytoplasm. Involved in virion maturation. The chain is FAD-linked sulfhydryl oxidase from Ornithodoros (relapsing fever ticks).